The primary structure comprises 907 residues: Epidermal growth factor receptor substrate 15-like 1 (907 aa).

Ala2 is subject to N-acetylalanine. The EH 1 domain occupies 15–104 (GNPLYESYYK…SLTMPPPKFH (90 aa)). Residues 15–368 (GNPLYESYYK…PSERGTPIPD (354 aa)) are interaction with DAB2. Residues 48–83 (LSDIILGKIWDLADPEGKGFLDKQGFYVALRLVACA) enclose the EF-hand 1 domain. Tyr74 carries the phosphotyrosine modification. Phosphoserine is present on residues Ser107 and Ser108. In terms of domain architecture, EH 2 spans 127 to 215 (EKAKFDGIFE…PPLIPPSKRK (89 aa)). An EF-hand 2 domain is found at 159-194 (LPLDVLGRVWDLSDIDKDGHLDRDEFAVAMHLVYRA). 5 residues coordinate Ca(2+): Asp172, Asp174, Asp176, His178, and Glu183. 5 positions are modified to phosphoserine: Ser229, Ser244, Ser253, Ser255, and Ser259. The segment at 229-260 (SPPPKDSLRSTPSHGSVSSLNSTGSLSPKHSV) is disordered. Low complexity predominate over residues 241–255 (SHGSVSSLNSTGSLS). 2 EF-hand domains span residues 272–307 (ADKM…SGLT) and 308–341 (QNLL…IQQK). The 91-residue stretch at 273 to 363 (DKMRFDEIFL…PDMVPPSERG (91 aa)) folds into the EH 3 domain. Ser360 is subject to Phosphoserine. Thr364 carries the post-translational modification Phosphothreonine. Ser369 and Ser375 each carry phosphoserine. Positions 384–551 (LDDISQEIAQ…RSKLSQLQES (168 aa)) form a coiled coil. The residue at position 558 (Ser558) is a Phosphoserine. Tyr562 carries the post-translational modification Phosphotyrosine. A Phosphoserine modification is found at Ser610. The disordered stretch occupies residues 611–860 (QELHPDPFQA…SSSGFADFTS (250 aa)). Basic and acidic residues predominate over residues 622–636 (DPFKSDPFKGADPFK). Residues 643-652 (DPFSEQQTAA) are compositionally biased toward polar residues. Phosphoserine is present on residues Ser664, Ser670, Ser695, Ser715, and Ser732. Positions 682 to 696 (NDPFTSDPFTKNPSL) are enriched in polar residues. Residues 703-743 (FESSDPFSSSSISSKGSDPFGTLDPFGSSSFSSAEGFADFS) show a composition bias toward low complexity. The span at 776 to 790 (ALPPKKPAPPRPKPP) shows a compositional bias: pro residues. Ser791 bears the Phosphoserine mark. Polar residues predominate over residues 791–802 (SGQSTPVSQLGS). The residue at position 795 (Thr795) is a Phosphothreonine. A compositionally biased stretch (low complexity) spans 840-853 (APSSSAKPPKTSSS). 2 consecutive UIM domains span residues 863–882 (NEEQ…EQER) and 889–907 (QEQE…DMPA).

As to quaternary structure, interacts with EPS15, AGFG1/HRB and AGFG2/HRBL. Associates with the clathrin-associated adapter protein complex 2 (AP-2). Interacts with FCHO1. Interacts with FCHO2. Interacts (via EH domains) with DAB2. Interacts with UBQLN1 (via ubiquitin-like domain). Interacts with CAVIN3 (via leucine-zipper domain). Interacts with REPS2. Post-translationally, phosphorylated on tyrosine residues by EGFR.

Its subcellular location is the cell membrane. It is found in the nucleus. The protein localises to the membrane. It localises to the coated pit. Seems to be a constitutive component of clathrin-coated pits that is required for receptor-mediated endocytosis. Involved in endocytosis of integrin beta-1 (ITGB1) and transferrin receptor (TFR); internalization of ITGB1 as DAB2-dependent cargo but not TFR seems to require association with DAB2. This chain is Epidermal growth factor receptor substrate 15-like 1 (Eps15l1), found in Mus musculus (Mouse).